A 357-amino-acid chain; its full sequence is Naringenin,2-oxoglutarate 3-dioxygenase (357 aa).

The Fe2OG dioxygenase domain maps to 189 to 293 (CVDMDQKIVV…RLSIATFQNP (105 aa)). H216, D218, and H274 together coordinate Fe cation. R284 serves as a coordination point for 2-oxoglutarate.

The protein belongs to the iron/ascorbate-dependent oxidoreductase family. Fe(2+) is required as a cofactor. It depends on L-ascorbate as a cofactor.

It carries out the reaction a (2S)-flavan-4-one + 2-oxoglutarate + O2 = a (2R,3R)-dihydroflavonol + succinate + CO2. Its pathway is secondary metabolite biosynthesis; flavonoid biosynthesis. Functionally, catalyzes the 3-beta-hydroxylation of 2S-flavanones to 2R,3R-dihydroflavonols which are intermediates in the biosynthesis of flavonols, anthocyanidins, catechins and proanthocyanidins in plants. This Matthiola incana (Common stock) protein is Naringenin,2-oxoglutarate 3-dioxygenase (FHT).